The following is a 722-amino-acid chain: Neprilysin-1 (722 aa).

A signal peptide spans 1–17 (MAVALLVALCVVSSRMA). The region spanning 32-722 (VCNSPVCQKA…MNPTHKCLLW (691 aa)) is the Peptidase M13 domain. Disulfide bonds link Cys33/Cys38, Cys56/Cys707, Cys64/Cys667, Cys120/Cys378, and Cys589/Cys719. Residues Asn100, Asn184, Asn207, and Asn424 are each glycosylated (N-linked (GlcNAc...) asparagine). His552 contributes to the Zn(2+) binding site. Residue Glu553 is part of the active site. His556 contacts Zn(2+). A glycan (N-linked (GlcNAc...) asparagine) is linked at Asn609. Residue Glu614 participates in Zn(2+) binding. The active-site Proton donor is the Asp618.

Belongs to the peptidase M13 family. Zn(2+) is required as a cofactor. Contains 5 disulfide bonds. In terms of tissue distribution, expressed by the venom gland.

The protein resides in the secreted. The polypeptide is Neprilysin-1 (Trittame loki (Brush-footed trapdoor spider)).